A 139-amino-acid polypeptide reads, in one-letter code: Phosphoribosyl-AMP cyclohydrolase (139 aa).

D92 contacts Mg(2+). C93 serves as a coordination point for Zn(2+). The Mg(2+) site is built by D94 and D96. Zn(2+) is bound by residues C111 and C118.

The protein belongs to the PRA-CH family. Homodimer. Requires Mg(2+) as cofactor. The cofactor is Zn(2+).

It localises to the cytoplasm. The catalysed reaction is 1-(5-phospho-beta-D-ribosyl)-5'-AMP + H2O = 1-(5-phospho-beta-D-ribosyl)-5-[(5-phospho-beta-D-ribosylamino)methylideneamino]imidazole-4-carboxamide. It functions in the pathway amino-acid biosynthesis; L-histidine biosynthesis; L-histidine from 5-phospho-alpha-D-ribose 1-diphosphate: step 3/9. In terms of biological role, catalyzes the hydrolysis of the adenine ring of phosphoribosyl-AMP. In Caulobacter vibrioides (strain ATCC 19089 / CIP 103742 / CB 15) (Caulobacter crescentus), this protein is Phosphoribosyl-AMP cyclohydrolase.